The sequence spans 518 residues: Endoglucanase 18 (518 aa).

The Cytoplasmic segment spans residues 1–35 (MANCVRCCCWLLVLMLMALAITAAVVFVRYKNGEG). The chain crosses the membrane as a helical span at residues 36–56 (VFPFPGVPGAVDHKYADALAV). Over 57–518 (ALQFFQVQKS…STSSLARSLS (462 aa)) the chain is Extracellular. The N-linked (GlcNAc...) asparagine glycan is linked to asparagine 71. The Nucleophile role is filled by aspartate 101. N-linked (GlcNAc...) asparagine glycosylation is found at asparagine 214, asparagine 251, and asparagine 272. Residue histidine 436 is part of the active site. N-linked (GlcNAc...) asparagine glycosylation is present at asparagine 477. Active-site residues include aspartate 482 and glutamate 491.

The protein belongs to the glycosyl hydrolase 9 (cellulase E) family.

Its subcellular location is the membrane. It carries out the reaction Endohydrolysis of (1-&gt;4)-beta-D-glucosidic linkages in cellulose, lichenin and cereal beta-D-glucans.. The protein is Endoglucanase 18 of Oryza sativa subsp. japonica (Rice).